A 229-amino-acid polypeptide reads, in one-letter code: MSDALTLPAEARERAGKGASRALRREGRVPAVIYGGKEEPTMIHVEEKLLIKQLMTGHFMNSIVEIEIGGKTVRTLPKDVALHPVSDRPEHADFFRLAKGGKIEVSVPVVFMNEEASPGLKKGGVLNVVRHELELVCENDKIPGEIEIDVTGKEVGDSIHISEITLPEGSESAITDRDFTIATLVAPSALKKAEGSEEEEDGEEVDADAVPATEQEGEDGDGEESKGDD.

2 disordered regions span residues 1 to 21 (MSDA…GASR) and 187 to 229 (PSAL…KGDD). The segment covering 196–207 (SEEEEDGEEVDA) has biased composition (acidic residues).

It belongs to the bacterial ribosomal protein bL25 family. CTC subfamily. As to quaternary structure, part of the 50S ribosomal subunit; part of the 5S rRNA/L5/L18/L25 subcomplex. Contacts the 5S rRNA. Binds to the 5S rRNA independently of L5 and L18.

This is one of the proteins that binds to the 5S RNA in the ribosome where it forms part of the central protuberance. The polypeptide is Large ribosomal subunit protein bL25 (Erythrobacter litoralis (strain HTCC2594)).